A 145-amino-acid chain; its full sequence is uncharacterized protein (145 aa).

Residues 46 to 66 traverse the membrane as a helical segment; that stretch reads FFFLFFLFFFFFFTFQFLVAF.

Its subcellular location is the membrane. This is an uncharacterized protein from Saccharomyces cerevisiae (strain ATCC 204508 / S288c) (Baker's yeast).